Consider the following 402-residue polypeptide: Xylose/arabinose-binding protein XylF (402 aa).

The chain crosses the membrane as a helical span at residues 38–58; that stretch reads GIIAGVLAAFGAGFGSGYVTA.

It belongs to the bacterial solute-binding protein 2 family. The complex is composed of two ATP-binding proteins (XylG), two transmembrane proteins (XylH) and a solute-binding protein (XylF).

It localises to the cell membrane. In terms of biological role, part of the ABC transporter complex XylFGH involved in the uptake of xylose and arabinose. The chain is Xylose/arabinose-binding protein XylF from Sulfolobus acidocaldarius (strain ATCC 33909 / DSM 639 / JCM 8929 / NBRC 15157 / NCIMB 11770).